A 101-amino-acid chain; its full sequence is MHWIFKKEPNISVQQNPTKENVSDVSMIEINNLTALERDEKVETEDINTNVIANTYTVQANVPTAFQTSETNSNTVTNVPKSPELISIQRLERLKNRYTFL.

This is an uncharacterized protein from Mycoplasma pneumoniae (strain ATCC 29342 / M129 / Subtype 1) (Mycoplasmoides pneumoniae).